The primary structure comprises 254 residues: Alcohol dehydrogenase 2 (254 aa).

10-33 (FVAGLGGIGFDTSREIVKRGPKNL) is an NAD(+) binding site. Serine 138 lines the substrate pocket. Tyrosine 151 serves as the catalytic Proton acceptor.

This sequence belongs to the short-chain dehydrogenases/reductases (SDR) family. In terms of assembly, homodimer.

The enzyme catalyses a primary alcohol + NAD(+) = an aldehyde + NADH + H(+). It catalyses the reaction a secondary alcohol + NAD(+) = a ketone + NADH + H(+). The chain is Alcohol dehydrogenase 2 (Adh2) from Drosophila mojavensis (Fruit fly).